The chain runs to 174 residues: MSKHKGPVDPESLPYRPCVGLMVLNKAGLVWAGRRIVIPGDEMDGATQLWQMPQGGIDKGEEPLEAAIRELYEETGMKSVSLLEEASDWINYDLPPHLVGQALKGKYRGQTQKWFAYRFEGDESEIAINPPPGGHTAEFDRWEWKPMVKLPELIVPFKRKVYEEVVAAFRHLVA.

The region spanning 14–167 is the Nudix hydrolase domain; sequence PYRPCVGLMV…KRKVYEEVVA (154 aa). A Nudix box motif is present at residues 55 to 76; it reads GGIDKGEEPLEAAIRELYEETG.

The protein belongs to the Nudix hydrolase family. RppH subfamily. Requires a divalent metal cation as cofactor.

Accelerates the degradation of transcripts by removing pyrophosphate from the 5'-end of triphosphorylated RNA, leading to a more labile monophosphorylated state that can stimulate subsequent ribonuclease cleavage. This chain is RNA pyrophosphohydrolase, found in Brucella anthropi (strain ATCC 49188 / DSM 6882 / CCUG 24695 / JCM 21032 / LMG 3331 / NBRC 15819 / NCTC 12168 / Alc 37) (Ochrobactrum anthropi).